Here is a 620-residue protein sequence, read N- to C-terminus: Two-component response regulator ORR27 (620 aa).

The Response regulatory domain maps to 24-138 (HVLVVDDDAA…AIKFIWKHVL (115 aa)). The residue at position 76 (D76) is a 4-aspartylphosphate. Disordered regions lie at residues 171–197 (PPAV…AELS) and 215–257 (VWSS…LEAT). Positions 261-321 (KKVRTRFTWT…HLQKYRSWLE (61 aa)) form a DNA-binding region, myb-like GARP. The segment covering 431–456 (SVSRDAHENGNSQARGSAMSNGTSGT) has biased composition (polar residues). Disordered stretches follow at residues 431–457 (SVSR…SGTR), 501–523 (SDQN…NSKT), and 596–620 (PPRG…SSGP). Over residues 603 to 620 (EIASHENTNGKNGASSGP) the composition is skewed to polar residues.

It belongs to the ARR family. Type-B subfamily. Two-component system major event consists of a His-to-Asp phosphorelay between a sensor histidine kinase (HK) and a response regulator (RR). In plants, the His-to-Asp phosphorelay involves an additional intermediate named Histidine-containing phosphotransfer protein (HPt). This multistep phosphorelay consists of a His-Asp-His-Asp sequential transfer of a phosphate group between first a His and an Asp of the HK protein, followed by the transfer to a conserved His of the HPt protein and finally the transfer to an Asp in the receiver domain of the RR protein.

The protein resides in the nucleus. Its function is as follows. Transcriptional activator that binds specific DNA sequence. Functions as a response regulator involved in His-to-Asp phosphorelay signal transduction system. Phosphorylation of the Asp residue in the receiver domain activates the ability of the protein to promote the transcription of target genes. May directly activate some type-A response regulators in response to cytokinins. The protein is Two-component response regulator ORR27 of Oryza sativa subsp. japonica (Rice).